The primary structure comprises 605 residues: uncharacterized protein (605 aa).

The interval 111 to 151 (VNVNDGKPNDIELSSTSKTENDPPLSLHTTPDDLQGNGVNV) is disordered.

The protein resides in the golgi apparatus. This is an uncharacterized protein from Schizosaccharomyces pombe (strain 972 / ATCC 24843) (Fission yeast).